A 199-amino-acid chain; its full sequence is Small ribosomal subunit protein uS5 (199 aa).

The segment at 1–29 (MATAGRRGGAASERRERRESRRQEASPEK) is disordered. A compositionally biased stretch (basic and acidic residues) spans 12–27 (SERRERRESRRQEASP). One can recognise an S5 DRBM domain in the interval 32–95 (FLERVVTINR…EEAKKHFFTV (64 aa)).

It belongs to the universal ribosomal protein uS5 family. Part of the 30S ribosomal subunit. Contacts proteins S4 and S8.

With S4 and S12 plays an important role in translational accuracy. In terms of biological role, located at the back of the 30S subunit body where it stabilizes the conformation of the head with respect to the body. The sequence is that of Small ribosomal subunit protein uS5 from Acidothermus cellulolyticus (strain ATCC 43068 / DSM 8971 / 11B).